The primary structure comprises 158 residues: Troponin C, isoform 1 (158 aa).

Ser-1 is subject to N-acetylserine. 4 EF-hand domains span residues 15–50 (EQIV…MGIK), 51–86 (VSST…FLIE), 91–126 (AMMK…LDAR), and 127–158 (LTAE…MMTG). The Ca(2+) site is built by Asp-64, Asp-66, Ser-68, Gln-70, and Glu-75. Asp-140, Asp-142, Ser-144, Thr-146, and Glu-151 together coordinate Ca(2+).

It belongs to the troponin C family.

In terms of biological role, troponin is the central regulatory protein of striated muscle contraction. Tn consists of three components: Tn-I which is the inhibitor of actomyosin ATPase, Tn-T which contains the binding site for tropomyosin and Tn-C. The binding of calcium to Tn-C abolishes the inhibitory action of Tn on actin filaments. The sequence is that of Troponin C, isoform 1 from Balanus nubilus (Giant acorn barnacle).